Here is a 963-residue protein sequence, read N- to C-terminus: Bifunctional glutamine synthetase adenylyltransferase/adenylyl-removing enzyme (963 aa).

The tract at residues 1-451 (MAAPSELQLY…EHFADIIAER (451 aa)) is adenylyl removase. An adenylyl transferase region spans residues 461–963 (TIEWKALWAG…VAFWEKVFAE (503 aa)).

Belongs to the GlnE family. Mg(2+) is required as a cofactor.

It carries out the reaction [glutamine synthetase]-O(4)-(5'-adenylyl)-L-tyrosine + phosphate = [glutamine synthetase]-L-tyrosine + ADP. It catalyses the reaction [glutamine synthetase]-L-tyrosine + ATP = [glutamine synthetase]-O(4)-(5'-adenylyl)-L-tyrosine + diphosphate. Involved in the regulation of glutamine synthetase GlnA, a key enzyme in the process to assimilate ammonia. When cellular nitrogen levels are high, the C-terminal adenylyl transferase (AT) inactivates GlnA by covalent transfer of an adenylyl group from ATP to specific tyrosine residue of GlnA, thus reducing its activity. Conversely, when nitrogen levels are low, the N-terminal adenylyl removase (AR) activates GlnA by removing the adenylyl group by phosphorolysis, increasing its activity. The regulatory region of GlnE binds the signal transduction protein PII (GlnB) which indicates the nitrogen status of the cell. This chain is Bifunctional glutamine synthetase adenylyltransferase/adenylyl-removing enzyme, found in Hahella chejuensis (strain KCTC 2396).